The primary structure comprises 205 residues: Holliday junction branch migration complex subunit RuvA (205 aa).

A domain I region spans residues 1 to 64 (MIGRLRGIVL…EDAQLLYGFN (64 aa)). A domain II region spans residues 65–143 (DKQERALFRE…GLNGDLFNQS (79 aa)). The interval 144-156 (SDINLPATAKQTT) is flexible linker. Residues 157-205 (SDADSEAEAAAALVSLGYKPQEASRMVSKIAKPGADCETLIREALRAVL) form a domain III region.

The protein belongs to the RuvA family. In terms of assembly, homotetramer. Forms an RuvA(8)-RuvB(12)-Holliday junction (HJ) complex. HJ DNA is sandwiched between 2 RuvA tetramers; dsDNA enters through RuvA and exits via RuvB. An RuvB hexamer assembles on each DNA strand where it exits the tetramer. Each RuvB hexamer is contacted by two RuvA subunits (via domain III) on 2 adjacent RuvB subunits; this complex drives branch migration. In the full resolvosome a probable DNA-RuvA(4)-RuvB(12)-RuvC(2) complex forms which resolves the HJ.

The protein localises to the cytoplasm. In terms of biological role, the RuvA-RuvB-RuvC complex processes Holliday junction (HJ) DNA during genetic recombination and DNA repair, while the RuvA-RuvB complex plays an important role in the rescue of blocked DNA replication forks via replication fork reversal (RFR). RuvA specifically binds to HJ cruciform DNA, conferring on it an open structure. The RuvB hexamer acts as an ATP-dependent pump, pulling dsDNA into and through the RuvAB complex. HJ branch migration allows RuvC to scan DNA until it finds its consensus sequence, where it cleaves and resolves the cruciform DNA. The sequence is that of Holliday junction branch migration complex subunit RuvA from Photorhabdus laumondii subsp. laumondii (strain DSM 15139 / CIP 105565 / TT01) (Photorhabdus luminescens subsp. laumondii).